A 165-amino-acid polypeptide reads, in one-letter code: MIEYRTVDSPIGLLTLAGRDPVLTNLRMVDQTYEPSRTGWTENPRAFAGAVEQLGAYFAGELTEFDIELDLRGSEFQRRVWRALQTIPYGETRSYGEIAEQIGAPGAARAVGLANGHNPIAIVVPCHRVIGASGKLTGYGGGLDRKQTLLALERRHSPASLTLFD.

Cys-126 serves as the catalytic Nucleophile; methyl group acceptor.

Belongs to the MGMT family.

The protein resides in the cytoplasm. It carries out the reaction a 6-O-methyl-2'-deoxyguanosine in DNA + L-cysteinyl-[protein] = S-methyl-L-cysteinyl-[protein] + a 2'-deoxyguanosine in DNA. It catalyses the reaction a 4-O-methyl-thymidine in DNA + L-cysteinyl-[protein] = a thymidine in DNA + S-methyl-L-cysteinyl-[protein]. Functionally, involved in the cellular defense against the biological effects of O6-methylguanine (O6-MeG) and O4-methylthymine (O4-MeT) in DNA. Repairs the methylated nucleobase in DNA by stoichiometrically transferring the methyl group to a cysteine residue in the enzyme. This is a suicide reaction: the enzyme is irreversibly inactivated. The chain is Methylated-DNA--protein-cysteine methyltransferase from Mycolicibacterium paratuberculosis (strain ATCC BAA-968 / K-10) (Mycobacterium paratuberculosis).